The primary structure comprises 66 residues: Large ribosomal subunit protein bL35 (66 aa).

Residues 1-16 (MPKMKTHKGSAKRFKK) are compositionally biased toward basic residues. The tract at residues 1–24 (MPKMKTHKGSAKRFKKTGTGQLKR) is disordered.

It belongs to the bacterial ribosomal protein bL35 family.

This Anoxybacillus flavithermus (strain DSM 21510 / WK1) protein is Large ribosomal subunit protein bL35.